We begin with the raw amino-acid sequence, 151 residues long: MILTIKPLKGKECNVQVTEDEKVSMVKELVSERLNIPANQQRLLYKGKALADEYRLSDYSIGPEAKLNLVVRPAGERSGMASSSSAVSGVWQTLSTVLAKHFSPADAAKVHEQLIKDYERSLRQLSLDDIERLAGRLLHPDSEGMDTSYMD.

One can recognise a Ubiquitin-like domain in the interval 1–76 (MILTIKPLKG…LNLVVRPAGE (76 aa)).

As to quaternary structure, component of the BAT3 complex.

The protein resides in the cytoplasm. It is found in the cytosol. Component of the BAT3 complex, a multiprotein complex involved in the post-translational delivery of tail-anchored (TA) membrane proteins to the endoplasmic reticulum membrane. TA membrane proteins, also named type II transmembrane proteins, contain a single C-terminal transmembrane region. The chain is Ubiquitin-like protein 4A-B (ubl4ab) from Oncorhynchus mykiss (Rainbow trout).